A 358-amino-acid chain; its full sequence is Phosphoserine aminotransferase (358 aa).

R41 contributes to the L-glutamate binding site. Residues 75–76, W100, T148, D167, and Q190 each bind pyridoxal 5'-phosphate; that span reads AS. Residue K191 is modified to N6-(pyridoxal phosphate)lysine. Residue 233 to 234 participates in pyridoxal 5'-phosphate binding; it reads NT.

The protein belongs to the class-V pyridoxal-phosphate-dependent aminotransferase family. SerC subfamily. Homodimer. Pyridoxal 5'-phosphate serves as cofactor.

The protein resides in the cytoplasm. It carries out the reaction O-phospho-L-serine + 2-oxoglutarate = 3-phosphooxypyruvate + L-glutamate. It catalyses the reaction 4-(phosphooxy)-L-threonine + 2-oxoglutarate = (R)-3-hydroxy-2-oxo-4-phosphooxybutanoate + L-glutamate. Its pathway is amino-acid biosynthesis; L-serine biosynthesis; L-serine from 3-phospho-D-glycerate: step 2/3. It participates in cofactor biosynthesis; pyridoxine 5'-phosphate biosynthesis; pyridoxine 5'-phosphate from D-erythrose 4-phosphate: step 3/5. In terms of biological role, catalyzes the reversible conversion of 3-phosphohydroxypyruvate to phosphoserine and of 3-hydroxy-2-oxo-4-phosphonooxybutanoate to phosphohydroxythreonine. The sequence is that of Phosphoserine aminotransferase from Campylobacter jejuni subsp. doylei (strain ATCC BAA-1458 / RM4099 / 269.97).